The chain runs to 696 residues: Methionine--tRNA ligase (696 aa).

Residues 12–22 carry the 'HIGH' region motif; sequence PYANGAIHLGH. Residues Cys143, Cys146, Cys156, and Cys159 each contribute to the Zn(2+) site. Positions 336–340 match the 'KMSKS' region motif; it reads KMSKS. ATP is bound at residue Lys339. A disordered region spans residues 556–580; that stretch reads SLAPAPEAQSQQRHAEHQQNEVTAE. In terms of domain architecture, tRNA-binding spans 591-696; the sequence is DFMKVDLRIV…SGAQPGMRVK (106 aa).

Belongs to the class-I aminoacyl-tRNA synthetase family. MetG type 1 subfamily. Homodimer. Zn(2+) is required as a cofactor.

Its subcellular location is the cytoplasm. It catalyses the reaction tRNA(Met) + L-methionine + ATP = L-methionyl-tRNA(Met) + AMP + diphosphate. Is required not only for elongation of protein synthesis but also for the initiation of all mRNA translation through initiator tRNA(fMet) aminoacylation. The protein is Methionine--tRNA ligase of Dechloromonas aromatica (strain RCB).